A 290-amino-acid chain; its full sequence is ATP synthase gamma chain (290 aa).

Belongs to the ATPase gamma chain family. In terms of assembly, F-type ATPases have 2 components, CF(1) - the catalytic core - and CF(0) - the membrane proton channel. CF(1) has five subunits: alpha(3), beta(3), gamma(1), delta(1), epsilon(1). CF(0) has three main subunits: a, b and c.

It is found in the cell membrane. Produces ATP from ADP in the presence of a proton gradient across the membrane. The gamma chain is believed to be important in regulating ATPase activity and the flow of protons through the CF(0) complex. The sequence is that of ATP synthase gamma chain from Akkermansia muciniphila (strain ATCC BAA-835 / DSM 22959 / JCM 33894 / BCRC 81048 / CCUG 64013 / CIP 107961 / Muc).